The primary structure comprises 797 residues: Ribosome biogenesis protein BOP1 homolog (797 aa).

Disordered regions lie at residues 22 to 112 and 149 to 177; these read LVPS…GGGP and SICA…RNTV. Residues 61–73 show a composition bias toward low complexity; sequence AGAAAAAVEGTAA. The span at 74–87 shows a compositional bias: acidic residues; that stretch reads PEDEAADNSSEEDA. Positions 90–112 are enriched in gly residues; it reads GSHGEGAGEGGGSGTWPGNGGGP. WD repeat units follow at residues 462–502, 504–544, 581–623, 626–664, 667–706, 710–749, and 766–797; these read GHMG…CWRT, VLEG…EEAE, RLRF…SQNP, KNRG…LAKK, GGGG…KPYK, YHSA…DLLT, and TASE…LYCN.

Belongs to the WD repeat BOP1/ERB1 family.

The protein localises to the nucleus. It is found in the nucleolus. Its subcellular location is the nucleoplasm. In terms of biological role, required for maturation of ribosomal RNAs and formation of the large ribosomal subunit. This chain is Ribosome biogenesis protein BOP1 homolog, found in Chlamydomonas reinhardtii (Chlamydomonas smithii).